A 239-amino-acid chain; its full sequence is Sugar fermentation stimulation protein homolog (239 aa).

This sequence belongs to the SfsA family.

This is Sugar fermentation stimulation protein homolog from Synechococcus sp. (strain JA-2-3B'a(2-13)) (Cyanobacteria bacterium Yellowstone B-Prime).